A 228-amino-acid chain; its full sequence is Lactate utilization protein A (228 aa).

This sequence belongs to the LutA/YkgE family.

Functionally, is involved in L-lactate degradation and allows cells to grow with lactate as the sole carbon source. The polypeptide is Lactate utilization protein A (Lysinibacillus sphaericus (strain C3-41)).